The chain runs to 156 residues: ATP synthase subunit b (156 aa).

Residues 11–31 (AIAFILFVWFCMKYVWPPLMA) form a helical membrane-spanning segment.

This sequence belongs to the ATPase B chain family. In terms of assembly, F-type ATPases have 2 components, F(1) - the catalytic core - and F(0) - the membrane proton channel. F(1) has five subunits: alpha(3), beta(3), gamma(1), delta(1), epsilon(1). F(0) has three main subunits: a(1), b(2) and c(10-14). The alpha and beta chains form an alternating ring which encloses part of the gamma chain. F(1) is attached to F(0) by a central stalk formed by the gamma and epsilon chains, while a peripheral stalk is formed by the delta and b chains.

The protein localises to the cell inner membrane. Its function is as follows. F(1)F(0) ATP synthase produces ATP from ADP in the presence of a proton or sodium gradient. F-type ATPases consist of two structural domains, F(1) containing the extramembraneous catalytic core and F(0) containing the membrane proton channel, linked together by a central stalk and a peripheral stalk. During catalysis, ATP synthesis in the catalytic domain of F(1) is coupled via a rotary mechanism of the central stalk subunits to proton translocation. Functionally, component of the F(0) channel, it forms part of the peripheral stalk, linking F(1) to F(0). The polypeptide is ATP synthase subunit b (Enterobacter sp. (strain 638)).